The primary structure comprises 372 residues: Histidinol-phosphate aminotransferase (372 aa).

Lys-230 is modified (N6-(pyridoxal phosphate)lysine).

Belongs to the class-II pyridoxal-phosphate-dependent aminotransferase family. Histidinol-phosphate aminotransferase subfamily. Homodimer. Requires pyridoxal 5'-phosphate as cofactor.

The catalysed reaction is L-histidinol phosphate + 2-oxoglutarate = 3-(imidazol-4-yl)-2-oxopropyl phosphate + L-glutamate. It functions in the pathway amino-acid biosynthesis; L-histidine biosynthesis; L-histidine from 5-phospho-alpha-D-ribose 1-diphosphate: step 7/9. The polypeptide is Histidinol-phosphate aminotransferase (Paenarthrobacter aurescens (strain TC1)).